We begin with the raw amino-acid sequence, 478 residues long: Abscisate beta-glucosyltransferase (478 aa).

Catalysis depends on His20, which acts as the Proton acceptor. An an anthocyanidin-binding site is contributed by His20. Asp108 functions as the Charge relay in the catalytic mechanism. 7 residues coordinate UDP-alpha-D-glucose: Ala340, Gln342, His357, Trp360, Asn361, Ser362, and Glu365. An anthocyanidin is bound at residue Ala380. UDP-alpha-D-glucose contacts are provided by Glu381 and Gln382.

This sequence belongs to the UDP-glycosyltransferase family.

It carries out the reaction 2-cis-(+)-abscisate + UDP-alpha-D-glucose = beta-D-glucopyranosyl cis-(+)-abscisate + UDP. Its function is as follows. Glucosyltransferase involved in the catabolism of abscisic acid (ABA). Adds a glucosyl group at the C-1 position of ABA; (S)-2-trans-abscisate is a better substrate than the natural (+)-S-abscisate or its enantiomer (-)-R-abscisate. No activity with (-)-phaseic acid (PA), methylated-ABA or with other hormones such as jasmonate, zeatin, auxin (IAA) or gibberellin A3 (GA3). The chain is Abscisate beta-glucosyltransferase (AOG) from Phaseolus angularis (Azuki bean).